Consider the following 300-residue polypeptide: Acetyl-coenzyme A carboxylase carboxyl transferase subunit beta (300 aa).

In terms of domain architecture, CoA carboxyltransferase N-terminal spans 24 to 293 (LWTNCESCSQ…NAPGAALGGA (270 aa)). Zn(2+)-binding residues include C28, C31, C47, and C50. The C4-type zinc-finger motif lies at 28-50 (CESCSQMILVKDLQKAMNVCPHC).

The protein belongs to the AccD/PCCB family. In terms of assembly, acetyl-CoA carboxylase is a heterohexamer composed of biotin carboxyl carrier protein (AccB), biotin carboxylase (AccC) and two subunits each of ACCase subunit alpha (AccA) and ACCase subunit beta (AccD). The cofactor is Zn(2+).

Its subcellular location is the cytoplasm. It catalyses the reaction N(6)-carboxybiotinyl-L-lysyl-[protein] + acetyl-CoA = N(6)-biotinyl-L-lysyl-[protein] + malonyl-CoA. Its pathway is lipid metabolism; malonyl-CoA biosynthesis; malonyl-CoA from acetyl-CoA: step 1/1. Component of the acetyl coenzyme A carboxylase (ACC) complex. Biotin carboxylase (BC) catalyzes the carboxylation of biotin on its carrier protein (BCCP) and then the CO(2) group is transferred by the transcarboxylase to acetyl-CoA to form malonyl-CoA. The polypeptide is Acetyl-coenzyme A carboxylase carboxyl transferase subunit beta (Gluconacetobacter diazotrophicus (strain ATCC 49037 / DSM 5601 / CCUG 37298 / CIP 103539 / LMG 7603 / PAl5)).